Reading from the N-terminus, the 124-residue chain is Ribosome-binding factor A (124 aa).

The protein belongs to the RbfA family. In terms of assembly, monomer. Binds 30S ribosomal subunits, but not 50S ribosomal subunits or 70S ribosomes.

It is found in the cytoplasm. In terms of biological role, one of several proteins that assist in the late maturation steps of the functional core of the 30S ribosomal subunit. Associates with free 30S ribosomal subunits (but not with 30S subunits that are part of 70S ribosomes or polysomes). Required for efficient processing of 16S rRNA. May interact with the 5'-terminal helix region of 16S rRNA. The chain is Ribosome-binding factor A from Thiobacillus denitrificans (strain ATCC 25259 / T1).